The chain runs to 380 residues: MTDSLVLSLAKDLIARPSVTPIDEGCQKMMAEFLAPLGFEIEPMVFHDTTNLWARRGTTGPVFCFAGHTDVVPSGPAEKWHTPPFEPTIIDGMLYGRGAADMKGSIASMMAAVQRFTTDYPAHQGSIAFLITSDEEGPFINGTPKVIETLEARQEKITWCLVGEPSSTNHVGDVVKNGRRGSLTGDLTIYGIQGHVAYPHLAENPVHLAIPALNELASKQWDQGNEFFPATSFQIANINSGTGASNVIPGEMQVQFNFRYSTELTDSQIKQQVAAILDNHGLRYELKWTLSGQPFLTGSGKLVEATQNAIKAITGQETELSTSGGTSDGRFIAPTGAQVIELGPVNATIHKVNECVRVADLETLSDIYYNMMQQLLVDHD.

H68 is a binding site for Zn(2+). Residue D70 is part of the active site. D101 contributes to the Zn(2+) binding site. The Proton acceptor role is filled by E135. Zn(2+) is bound by residues E136, E164, and H350.

It belongs to the peptidase M20A family. DapE subfamily. In terms of assembly, homodimer. The cofactor is Zn(2+). It depends on Co(2+) as a cofactor.

The enzyme catalyses N-succinyl-(2S,6S)-2,6-diaminopimelate + H2O = (2S,6S)-2,6-diaminopimelate + succinate. Its pathway is amino-acid biosynthesis; L-lysine biosynthesis via DAP pathway; LL-2,6-diaminopimelate from (S)-tetrahydrodipicolinate (succinylase route): step 3/3. Catalyzes the hydrolysis of N-succinyl-L,L-diaminopimelic acid (SDAP), forming succinate and LL-2,6-diaminopimelate (DAP), an intermediate involved in the bacterial biosynthesis of lysine and meso-diaminopimelic acid, an essential component of bacterial cell walls. The polypeptide is Succinyl-diaminopimelate desuccinylase (Tolumonas auensis (strain DSM 9187 / NBRC 110442 / TA 4)).